Consider the following 134-residue polypeptide: Large ribosomal subunit protein uL16 (134 aa).

A compositionally biased stretch (basic residues) spans 1–20 (MLLQPKRTKFRKMHKGRNRG). The segment at 1 to 21 (MLLQPKRTKFRKMHKGRNRGT) is disordered.

It belongs to the universal ribosomal protein uL16 family. As to quaternary structure, part of the 50S ribosomal subunit.

Its function is as follows. Binds 23S rRNA and is also seen to make contacts with the A and possibly P site tRNAs. This Blochmanniella pennsylvanica (strain BPEN) protein is Large ribosomal subunit protein uL16.